A 430-amino-acid polypeptide reads, in one-letter code: tRNA(Ile)-lysidine synthase (430 aa).

ATP is bound at residue 21–26 (SGGLDS).

The protein belongs to the tRNA(Ile)-lysidine synthase family.

It is found in the cytoplasm. The enzyme catalyses cytidine(34) in tRNA(Ile2) + L-lysine + ATP = lysidine(34) in tRNA(Ile2) + AMP + diphosphate + H(+). Ligates lysine onto the cytidine present at position 34 of the AUA codon-specific tRNA(Ile) that contains the anticodon CAU, in an ATP-dependent manner. Cytidine is converted to lysidine, thus changing the amino acid specificity of the tRNA from methionine to isoleucine. The sequence is that of tRNA(Ile)-lysidine synthase from Salmonella paratyphi A (strain ATCC 9150 / SARB42).